The sequence spans 257 residues: tRNA (guanine-N(1)-)-methyltransferase (257 aa).

Residues glycine 112 and 136–141 (LGDYVL) each bind S-adenosyl-L-methionine.

Belongs to the RNA methyltransferase TrmD family. In terms of assembly, homodimer.

It localises to the cytoplasm. It catalyses the reaction guanosine(37) in tRNA + S-adenosyl-L-methionine = N(1)-methylguanosine(37) in tRNA + S-adenosyl-L-homocysteine + H(+). Specifically methylates guanosine-37 in various tRNAs. This Salinispora arenicola (strain CNS-205) protein is tRNA (guanine-N(1)-)-methyltransferase.